A 162-amino-acid polypeptide reads, in one-letter code: Regulator of sigma D (162 aa).

It belongs to the Rsd/AlgQ family. Interacts with RpoD.

The protein localises to the cytoplasm. Its function is as follows. Binds RpoD and negatively regulates RpoD-mediated transcription activation by preventing the interaction between the primary sigma factor RpoD with the catalytic core of the RNA polymerase and with promoter DNA. May be involved in replacement of the RNA polymerase sigma subunit from RpoD to RpoS during the transition from exponential growth to the stationary phase. This Salmonella choleraesuis (strain SC-B67) protein is Regulator of sigma D.